The chain runs to 74 residues: Brevinin-2Tb (74 aa).

An N-terminal signal peptide occupies residues 1 to 22; the sequence is MFTMKKSLLLFFFLGTISLSLC. A propeptide spanning residues 23-40 is cleaved from the precursor; it reads QEERNADEDDGEMTEEEK. A disulfide bridge links C68 with C74.

It belongs to the frog skin active peptide (FSAP) family. Brevinin subfamily. As to expression, expressed by the skin glands.

The protein resides in the secreted. Antimicrobial peptide. This is Brevinin-2Tb from Rana temporaria (European common frog).